A 401-amino-acid polypeptide reads, in one-letter code: Argininosuccinate synthase (401 aa).

9 to 17 (AYSGGLDTS) contributes to the ATP binding site. Tyrosine 88 is a binding site for L-citrulline. ATP is bound at residue glycine 118. L-aspartate is bound by residues threonine 120, asparagine 124, and aspartate 125. Asparagine 124 provides a ligand contact to L-citrulline. Arginine 128, serine 176, serine 185, glutamate 261, and tyrosine 273 together coordinate L-citrulline.

It belongs to the argininosuccinate synthase family. Type 1 subfamily. As to quaternary structure, homotetramer.

Its subcellular location is the cytoplasm. It catalyses the reaction L-citrulline + L-aspartate + ATP = 2-(N(omega)-L-arginino)succinate + AMP + diphosphate + H(+). It functions in the pathway amino-acid biosynthesis; L-arginine biosynthesis; L-arginine from L-ornithine and carbamoyl phosphate: step 2/3. This Symbiobacterium thermophilum (strain DSM 24528 / JCM 14929 / IAM 14863 / T) protein is Argininosuccinate synthase.